The following is a 314-amino-acid chain: L-lactate dehydrogenase (314 aa).

NAD(+)-binding positions include valine 17, aspartate 38, lysine 43, tyrosine 69, and 83 to 84; that span reads GA. Substrate is bound by residues glutamine 86 and arginine 92. Residues serine 105, 122–124, and serine 147 contribute to the NAD(+) site; that span reads ASN. 124–127 is a binding site for substrate; that stretch reads NPVD. 152-155 is a substrate binding site; that stretch reads DSAR. The beta-D-fructose 1,6-bisphosphate site is built by arginine 157 and histidine 172. Histidine 179 acts as the Proton acceptor in catalysis. Residue tyrosine 223 is modified to Phosphotyrosine. Threonine 232 contributes to the substrate binding site.

Belongs to the LDH/MDH superfamily. LDH family. Homotetramer.

Its subcellular location is the cytoplasm. It carries out the reaction (S)-lactate + NAD(+) = pyruvate + NADH + H(+). It functions in the pathway fermentation; pyruvate fermentation to lactate; (S)-lactate from pyruvate: step 1/1. Allosterically activated by fructose 1,6-bisphosphate (FBP). In terms of biological role, catalyzes the conversion of lactate to pyruvate. The chain is L-lactate dehydrogenase from Corynebacterium glutamicum (strain R).